The sequence spans 603 residues: NADH-quinone oxidoreductase subunit C/D (603 aa).

The NADH dehydrogenase I subunit C stretch occupies residues 1–193 (MVNNMTDLTA…DPFTLTKQKE (193 aa)). An NADH dehydrogenase I subunit D region spans residues 217-603 (DFMFLNLGPN…IDFVMSDVDR (387 aa)).

This sequence in the N-terminal section; belongs to the complex I 30 kDa subunit family. The protein in the C-terminal section; belongs to the complex I 49 kDa subunit family. NDH-1 is composed of 13 different subunits. Subunits NuoB, CD, E, F, and G constitute the peripheral sector of the complex.

It is found in the cell inner membrane. It catalyses the reaction a quinone + NADH + 5 H(+)(in) = a quinol + NAD(+) + 4 H(+)(out). NDH-1 shuttles electrons from NADH, via FMN and iron-sulfur (Fe-S) centers, to quinones in the respiratory chain. The immediate electron acceptor for the enzyme in this species is believed to be ubiquinone. Couples the redox reaction to proton translocation (for every two electrons transferred, four hydrogen ions are translocated across the cytoplasmic membrane), and thus conserves the redox energy in a proton gradient. This is NADH-quinone oxidoreductase subunit C/D from Cronobacter sakazakii (strain ATCC BAA-894) (Enterobacter sakazakii).